Here is a 142-residue protein sequence, read N- to C-terminus: Large ribosomal subunit protein uL11 (142 aa).

Belongs to the universal ribosomal protein uL11 family. As to quaternary structure, part of the ribosomal stalk of the 50S ribosomal subunit. Interacts with L10 and the large rRNA to form the base of the stalk. L10 forms an elongated spine to which L12 dimers bind in a sequential fashion forming a multimeric L10(L12)X complex. In terms of processing, one or more lysine residues are methylated.

In terms of biological role, forms part of the ribosomal stalk which helps the ribosome interact with GTP-bound translation factors. The sequence is that of Large ribosomal subunit protein uL11 from Klebsiella pneumoniae (strain 342).